The chain runs to 447 residues: N-succinylarginine dihydrolase (447 aa).

Residues 19 to 28 (AGLSFGNEAS), Asn110, and 137 to 138 (HR) each bind substrate. The active site involves Glu174. Arg212 serves as a coordination point for substrate. The active site involves His248. Asp250 and Asn359 together coordinate substrate. The Nucleophile role is filled by Cys365.

It belongs to the succinylarginine dihydrolase family. In terms of assembly, homodimer.

It catalyses the reaction N(2)-succinyl-L-arginine + 2 H2O + 2 H(+) = N(2)-succinyl-L-ornithine + 2 NH4(+) + CO2. It participates in amino-acid degradation; L-arginine degradation via AST pathway; L-glutamate and succinate from L-arginine: step 2/5. In terms of biological role, catalyzes the hydrolysis of N(2)-succinylarginine into N(2)-succinylornithine, ammonia and CO(2). The chain is N-succinylarginine dihydrolase from Escherichia coli (strain SE11).